We begin with the raw amino-acid sequence, 408 residues long: Indian hedgehog protein (408 aa).

An N-terminal signal peptide occupies residues 1 to 23 (MKPARLLLLLSGCALLLAPAVRC). Cys-24 carries N-palmitoyl cysteine lipidation. The Ca(2+) site is built by Glu-90, Glu-91, Asp-96, Thr-126, Glu-127, Asp-130, and Asp-132. Residues His-141, Asp-148, and His-183 each contribute to the Zn(2+) site. Gly-198 carries Cholesterol glycine ester lipidation.

The protein belongs to the hedgehog family. Multimer. In terms of assembly, interacts with BOC and CDON. Interacts with PTCH1. Interacts with glypican GPC3. Post-translationally, cholesterylation is required for N-product targeting to lipid rafts and multimerization. In terms of processing, the C-terminal domain displays an autoproteolysis activity and a cholesterol transferase activity. Both activities result in the cleavage of the full-length protein and covalent attachment of a cholesterol moiety to the C-terminal of the newly generated N-product. The N-product is the active species in both local and long-range signaling, whereas the C-product is degraded in the endoplasmic reticulum. N-palmitoylation by HHAT of N-product is required for indian hedgehog protein N-product multimerization and full activity. Expressed in developing midgut, lung and cartilage of developing long bones in the limb.

It localises to the cell membrane. It is found in the endoplasmic reticulum membrane. The protein resides in the golgi apparatus membrane. Its subcellular location is the secreted. It carries out the reaction glycyl-L-cysteinyl-[protein] + cholesterol + H(+) = [protein]-C-terminal glycyl cholesterol ester + N-terminal L-cysteinyl-[protein]. Plays a role in embryonic morphogenesis; it is involved in the regulation of endochondral skeleton formation, and the development of retinal pigment epithelium (RPE), photoreceptors and periocular tissues. Its function is as follows. The C-terminal part of the indian hedgehog protein precursor displays an autoproteolysis and a cholesterol transferase activity. Both activities result in the cleavage of the full-length protein into two parts followed by the covalent attachment of a cholesterol moiety to the C-terminal of the newly generated N-product. Both activities occur in the endoplasmic reticulum. In terms of biological role, the dually lipidated indian hedgehog protein N-product is a morphogen which is essential for a variety of patterning events during development. Binds to the patched (PTCH1) receptor, which functions in association with smoothened (SMO), to activate the transcription of target genes. Plays a role in morphogenesis of the skeleton by coordinating growth and differentiation of the endochondral skeleton. Positively regulates PTHLH expression during endochondral bone formation preventing chondrocyte hypertrophy. In contrast, participates in normal chondrocyte proliferation in a PTHLH-independent pathway. The chain is Indian hedgehog protein from Gallus gallus (Chicken).